The primary structure comprises 63 residues: Large ribosomal subunit protein uL29 (63 aa).

Belongs to the universal ribosomal protein uL29 family.

The protein is Large ribosomal subunit protein uL29 of Christiangramia forsetii (strain DSM 17595 / CGMCC 1.15422 / KT0803) (Gramella forsetii).